The sequence spans 272 residues: Transcription factor GAL1 (272 aa).

Residues 1–10 are compositionally biased toward polar residues; that stretch reads MAGKNMSSRL. 3 disordered regions span residues 1-49, 102-215, and 246-272; these read MAGK…SPET, YGAI…SRDI, and KGHL…AMDY. Acidic residues-rich tracts occupy residues 113-122 and 152-174; these read ESDDDQDEEQ and SEQD…DEAE. The segment covering 175–215 has biased composition (basic and acidic residues); the sequence is LLIKAERKEAAAKLRAERKAQRKADEVKSKQMAERRRSRDI. A CCHC-type zinc finger spans residues 240-255; the sequence is CHVCGQKGHLQKDCPD.

The protein resides in the nucleus. Its function is as follows. Transcription factor; part of the gene cluster that mediates the biosynthesis of liamocins, glycolipids (also called heavy oils) composed of a single mannitol or arabitol headgroup linked to either three, four or even six 3,5-dihydroxydecanoic ester tail-groups. Positively regulates the expression of PKS1 and EST1 that mediate the biosynthesis of liamocins. The polypeptide is Transcription factor GAL1 (Aureobasidium melanogenum (Aureobasidium pullulans var. melanogenum)).